The sequence spans 299 residues: CCR4-NOT transcription complex subunit 9 (299 aa).

This sequence belongs to the CNOT9 family. Homodimer. Component of the CCR4-NOT complex.

It is found in the nucleus. The protein localises to the cytoplasm. Its subcellular location is the P-body. Its function is as follows. Component of the CCR4-NOT complex which is one of the major cellular mRNA deadenylases and is linked to various cellular processes including bulk mRNA degradation, miRNA-mediated repression, translational repression during translational initiation and general transcription regulation. Additional complex functions may be a consequence of its influence on mRNA expression. Involved in down-regulation of MYB- and JUN-dependent transcription. Enhances ligand-dependent transcriptional activity of nuclear hormone receptors. May play a role in cell differentiation. This Xenopus tropicalis (Western clawed frog) protein is CCR4-NOT transcription complex subunit 9.